The sequence spans 254 residues: MKIGVYGASGRIGKLLLEELKGGYKGLALSSVFVRQKCETDFSSFSHAPLVTNDLKAFVRACECVIDFSLPKGVDNLLEALLECPKILVSGTTGLEKETLEKMQQLALKAPLLHAHNMSIGIMMLNQLAFLTSLKLKDADIEIIETHHNLKKDIPSGTALSLYETCAKARGYDEKNALITHREGLRSKESIGIAALRGGDVAGKHTIGFYLEGEYIELSHTATNRSIFAKGALEVALWLKDKAAKKYEINEMFG.

7-12 (GASGRI) provides a ligand contact to NAD(+). Position 35 (Arg-35) interacts with NADP(+). NAD(+) contacts are provided by residues 91–93 (GTT) and 115–118 (AHNM). His-147 functions as the Proton donor/acceptor in the catalytic mechanism. His-148 lines the (S)-2,3,4,5-tetrahydrodipicolinate pocket. The active-site Proton donor is the Lys-151. Position 157 to 158 (157 to 158 (GT)) interacts with (S)-2,3,4,5-tetrahydrodipicolinate.

Belongs to the DapB family.

The protein localises to the cytoplasm. It catalyses the reaction (S)-2,3,4,5-tetrahydrodipicolinate + NAD(+) + H2O = (2S,4S)-4-hydroxy-2,3,4,5-tetrahydrodipicolinate + NADH + H(+). It carries out the reaction (S)-2,3,4,5-tetrahydrodipicolinate + NADP(+) + H2O = (2S,4S)-4-hydroxy-2,3,4,5-tetrahydrodipicolinate + NADPH + H(+). It participates in amino-acid biosynthesis; L-lysine biosynthesis via DAP pathway; (S)-tetrahydrodipicolinate from L-aspartate: step 4/4. Catalyzes the conversion of 4-hydroxy-tetrahydrodipicolinate (HTPA) to tetrahydrodipicolinate. The polypeptide is 4-hydroxy-tetrahydrodipicolinate reductase (Helicobacter pylori (strain ATCC 700392 / 26695) (Campylobacter pylori)).